The chain runs to 435 residues: ATP-dependent protease ATPase subunit HslU (435 aa).

ATP contacts are provided by residues Val18, 60-65 (GVGKTE), Asp248, Glu313, and Arg385.

It belongs to the ClpX chaperone family. HslU subfamily. A double ring-shaped homohexamer of HslV is capped on each side by a ring-shaped HslU homohexamer. The assembly of the HslU/HslV complex is dependent on binding of ATP.

The protein localises to the cytoplasm. Its function is as follows. ATPase subunit of a proteasome-like degradation complex; this subunit has chaperone activity. The binding of ATP and its subsequent hydrolysis by HslU are essential for unfolding of protein substrates subsequently hydrolyzed by HslV. HslU recognizes the N-terminal part of its protein substrates and unfolds these before they are guided to HslV for hydrolysis. This is ATP-dependent protease ATPase subunit HslU from Azorhizobium caulinodans (strain ATCC 43989 / DSM 5975 / JCM 20966 / LMG 6465 / NBRC 14845 / NCIMB 13405 / ORS 571).